A 262-amino-acid polypeptide reads, in one-letter code: MEGFSLRINQFLAHYTKHSRREAEKLVLEGRVKINHEHAKLASVVKENDRVFLDKRLIKPLKNKKFSVLVYHKPKGELVSKADPLKRRVIYESLEKKYAHFAPVGRLDFASEGVLLLSDSKAVVSALMHADLEKEYLIKIQGFVTREMENAMQEGLKLENATKGAHQKTPIKSMEFAPFIGYEIIKNHAKYSKLRVIINEGKNRELRRFFAFFNAGVLDLRRVRYGFVNLNALPVGKMRFLNRQEYNELHAFMANAANVKGD.

In terms of domain architecture, S4 RNA-binding spans 6 to 70; it reads LRINQFLAHY…LKNKKFSVLV (65 aa). Residue Asp108 is the Nucleophile of the active site.

This sequence belongs to the pseudouridine synthase RsuA family.

It carries out the reaction a uridine in RNA = a pseudouridine in RNA. This is an uncharacterized protein from Helicobacter pylori (strain ATCC 700392 / 26695) (Campylobacter pylori).